Reading from the N-terminus, the 293-residue chain is DOMON domain-containing protein FRRS1L (293 aa).

An N-terminal signal peptide occupies residues 1–28 (MARPPRQHPGVWASLLLLLLTGPAACAA). The disordered stretch occupies residues 29–61 (SPADDGAGPGGRGPRGRARGDTGADEAVPRHDS). A compositionally biased stretch (basic and acidic residues) spans 46 to 61 (ARGDTGADEAVPRHDS). In terms of domain architecture, DOMON spans 119–234 (CDYFLSYRMI…WYYLFAWGPA (116 aa)). A helical transmembrane segment spans residues 271-291 (TFSSPFCLLLIVALTFYLLMG).

Component of the outer core of AMPAR complex. AMPAR complex consists of an inner core made of 4 pore-forming GluA/GRIA proteins (GRIA1, GRIA2, GRIA3 and GRIA4) and 4 major auxiliary subunits arranged in a twofold symmetry. One of the two pairs of distinct binding sites is occupied either by CNIH2, CNIH3 or CACNG2, CACNG3. The other harbors CACNG2, CACNG3, CACNG4, CACNG8 or GSG1L. This inner core of AMPAR complex is complemented by outer core constituents binding directly to the GluA/GRIA proteins at sites distinct from the interaction sites of the inner core constituents. Outer core constituents include at least PRRT1, PRRT2, CKAMP44/SHISA9, FRRS1L and NRN1. The proteins of the inner and outer core serve as a platform for other, more peripherally associated AMPAR constituents. Alone or in combination, these auxiliary subunits control the gating and pharmacology of the AMPAR complex and profoundly impact their biogenesis and protein processing. As to expression, expressed in adult and fetal brain. Very weak expression in medulla, spinal cord and in adult ovary.

It is found in the cell membrane. It localises to the synapse. Its function is as follows. Important modulator of glutamate signaling pathway. The sequence is that of DOMON domain-containing protein FRRS1L (FRRS1L) from Homo sapiens (Human).